The primary structure comprises 97 residues: Large ribosomal subunit protein uL23 (97 aa).

The protein belongs to the universal ribosomal protein uL23 family. Part of the 50S ribosomal subunit. Contacts protein L29, and trigger factor when it is bound to the ribosome.

Its function is as follows. One of the early assembly proteins it binds 23S rRNA. One of the proteins that surrounds the polypeptide exit tunnel on the outside of the ribosome. Forms the main docking site for trigger factor binding to the ribosome. The chain is Large ribosomal subunit protein uL23 from Lactiplantibacillus plantarum (strain ATCC BAA-793 / NCIMB 8826 / WCFS1) (Lactobacillus plantarum).